A 444-amino-acid chain; its full sequence is Tol-Pal system protein TolB (444 aa).

An N-terminal signal peptide occupies residues 1-18 (MKNIIYCILLLFSFNSYA).

Belongs to the TolB family. In terms of assembly, the Tol-Pal system is composed of five core proteins: the inner membrane proteins TolA, TolQ and TolR, the periplasmic protein TolB and the outer membrane protein Pal. They form a network linking the inner and outer membranes and the peptidoglycan layer.

Its subcellular location is the periplasm. Its function is as follows. Part of the Tol-Pal system, which plays a role in outer membrane invagination during cell division and is important for maintaining outer membrane integrity. This Rickettsia bellii (strain OSU 85-389) protein is Tol-Pal system protein TolB.